A 195-amino-acid chain; its full sequence is Nascent polypeptide-associated complex subunit alpha (195 aa).

2 disordered regions span residues 1–59 and 132–153; these read MTGS…SRSE and TREA…EEDS. A compositionally biased stretch (basic and acidic residues) spans 7–16; the sequence is TRQKEVKEPQ. A compositionally biased stretch (acidic residues) spans 19–33; it reads VSDDSDNEAVEQELT. The span at 47–59 shows a compositional bias: basic and acidic residues; that stretch reads DHIDKQAKQSRSE. An NAC-A/B domain is found at 56 to 121; the sequence is SRSEKKARKL…AKIEDLTQHA (66 aa). Acidic residues predominate over residues 142–153; it reads EEDENEDVEEDS.

The protein belongs to the NAC-alpha family. As to quaternary structure, may be part of the nascent polypeptide-associated complex (NAC), which is a heterodimer of icd-2 and icd-1 (via NAC-A/B domains).

The protein localises to the cytoplasm. In terms of biological role, may prevent inappropriate targeting of non-secretory polypeptides to the endoplasmic reticulum (ER). Plays a role in the response to heat stress. In Caenorhabditis elegans, this protein is Nascent polypeptide-associated complex subunit alpha.